A 64-amino-acid chain; its full sequence is Prokaryotic ubiquitin-like protein Pup (64 aa).

Composition is skewed to basic and acidic residues over residues 1–11 (MAQEQTKRTGG) and 25–34 (GQERREKLAE). Residues 1-38 (MAQEQTKRTGGGDEDEGSAGPEAAGQERREKLAEDTDD) are disordered. The ARC ATPase binding stretch occupies residues 21–58 (PEAAGQERREKLAEDTDDLLDEIDDVLEENAEDFVRAY). A coiled-coil region spans residues 24-52 (AGQERREKLAEDTDDLLDEIDDVLEENAE). Position 64 is a deamidated glutamine (glutamine 64). Glutamine 64 participates in a covalent cross-link: Isoglutamyl lysine isopeptide (Gln-Lys) (interchain with K-? in acceptor proteins).

Belongs to the prokaryotic ubiquitin-like protein family. In terms of assembly, strongly interacts with the proteasome-associated ATPase ARC through a hydrophobic interface; the interacting region of Pup lies in its C-terminal half. There is one Pup binding site per ARC hexamer ring. Is modified by deamidation of its C-terminal glutamine to glutamate by the deamidase Dop, a prerequisite to the subsequent pupylation process.

It participates in protein degradation; proteasomal Pup-dependent pathway. In terms of biological role, protein modifier that is covalently attached to lysine residues of substrate proteins, thereby targeting them for proteasomal degradation. The tagging system is termed pupylation. The chain is Prokaryotic ubiquitin-like protein Pup from Nocardia farcinica (strain IFM 10152).